The following is a 536-amino-acid chain: Glutamate--tRNA ligase, mitochondrial (536 aa).

An L-glutamate-binding site is contributed by 48 to 50; it reads RFA. Positions 53 to 61 match the 'HIGH' region motif; that stretch reads PTGFLHLGS. An ATP-binding site is contributed by His58. Residues Glu84, 235 to 239, and Arg253 each bind L-glutamate; that span reads YHLAN. ATP is bound by residues Glu256 and 291–295; that span reads KLSKR. Positions 291-295 match the 'KMSKS' region motif; sequence KLSKR.

It belongs to the class-I aminoacyl-tRNA synthetase family. Glutamate--tRNA ligase type 1 subfamily.

It localises to the mitochondrion matrix. It carries out the reaction tRNA(Glu) + L-glutamate + ATP = L-glutamyl-tRNA(Glu) + AMP + diphosphate. Its function is as follows. Catalyzes the attachment of glutamate to tRNA(Glu) in a two-step reaction: glutamate is first activated by ATP to form Glu-AMP and then transferred to the acceptor end of tRNA(Glu). The protein is Glutamate--tRNA ligase, mitochondrial (MSE1) of Saccharomyces cerevisiae (strain ATCC 204508 / S288c) (Baker's yeast).